A 609-amino-acid chain; its full sequence is Copper resistance protein A (609 aa).

Positions 1–32 (MESRTSRRTFVKGLAAAGVLGGLGLWRSPSWA) form a signal peptide, tat-type signal. His-100, His-102, His-142, and His-144 together coordinate Cu cation. 5 consecutive repeat copies span residues 367–374 (DDMGMGGM), 375–382 (DHGSMDGM), 408–415 (DHSKMSTM), 419–426 (DHGAMSGM), and 427–434 (DHGAMGGM). The 5 X 8 AA tandem repeats of D-H-X-X-M-X-G-M stretch occupies residues 367–434 (DDMGMGGMDH…GMDHGAMGGM (68 aa)). Cu cation contacts are provided by His-542, His-545, His-547, His-590, Cys-591, His-592, His-596, and Met-601.

Belongs to the multicopper oxidase family. CopA subfamily. Predicted to be exported by the Tat system. The position of the signal peptide cleavage has been experimentally proven.

The protein resides in the periplasm. In terms of biological role, mediates copper resistance by sequestration of copper in the periplasm along with the copper-binding protein CopC. May have oxidase activity. The sequence is that of Copper resistance protein A (copA) from Pseudomonas syringae pv. tomato.